The chain runs to 377 residues: Palmitoyltransferase ZDHHC16 (377 aa).

Topologically, residues 1–77 (MRGQRSLLLG…VYWLVDNVIR (77 aa)) are cytoplasmic. The helical transmembrane segment at 78–98 (WFGVVFVVLVIVLTGSIVAIA) threads the bilayer. At 99–116 (YLCVLPLILRTYSVPRLC) the chain is on the lumenal side. The helical transmembrane segment at 117 to 137 (WHFFYSHWNLILIVFHYYQAI) threads the bilayer. Topologically, residues 138–198 (TTPPGYPPQG…NNCVGHYNHR (61 aa)) are cytoplasmic. Positions 155 to 205 (SICKKCIYPKPARTHHCSICNRCVLKMDHHCPWLNNCVGHYNHRYFFSFCF) constitute a DHHC domain. Residue cysteine 185 is the S-palmitoyl cysteine intermediate of the active site. The helical transmembrane segment at 199–219 (YFFSFCFFMTLGCVYCSYGSW) threads the bilayer. Residues 220–266 (DLFREAYAAIEKMKQLDKNKLQAVANQTYHQTPPPIFSFRERMTHKS) are Lumenal-facing. The helical transmembrane segment at 267 to 287 (LVYLWFLCSSVALALGALTVW) threads the bilayer. Residues 288 to 377 (HAVLISRGET…TAHSASVMAV (90 aa)) are Cytoplasmic-facing.

Belongs to the DHHC palmitoyltransferase family. In terms of assembly, interacts with ABL1. Interacts with COPS5/JAB1.

It localises to the endoplasmic reticulum membrane. It carries out the reaction L-cysteinyl-[protein] + hexadecanoyl-CoA = S-hexadecanoyl-L-cysteinyl-[protein] + CoA. Palmitoyl acyltransferase that mediates palmitoylation of proteins such as PLN and ZDHHC6. Required during embryonic heart development and cardiac function, possibly by mediating palmitoylation of PLN, thereby affecting PLN phosphorylation and homooligomerization. Also required for eye development. Palmitoylates ZDHHC6, affecting the quaternary assembly of ZDHHC6, its localization, stability and function. May play a role in DNA damage response. May be involved in apoptosis regulation. Involved in the proliferation of neural stem cells by regulating the FGF/ERK pathway. The polypeptide is Palmitoyltransferase ZDHHC16 (Macaca fascicularis (Crab-eating macaque)).